Consider the following 399-residue polypeptide: Lysosomal acid lipase/cholesteryl ester hydrolase (399 aa).

The N-terminal stretch at 1 to 27 (MKMRFLGLVVCLVLWTLHSEGSGGKLT) is a signal peptide. Residues 28-76 (AVDPETNMNVSEIISYWGFPSEEYLVETEDGYILCLNRIPHGRKNHSDK) constitute a propeptide, removed in mature form. N36, N72, N101, and N161 each carry an N-linked (GlcNAc...) asparagine glycan. An AB hydrolase-1 domain is found at 80–380 (PVVFLQHGLL…EWEHLDFIWG (301 aa)). The Charge relay system role is filled by S174. 2 N-linked (GlcNAc...) asparagine glycosylation sites follow: N273 and N321. H374 acts as the Charge relay system in catalysis.

The protein belongs to the AB hydrolase superfamily. Lipase family. As to quaternary structure, monomer. Glycosylation is not essential for catalytic activity. As to expression, most abundantly expressed in brain, lung, kidney and mammary gland, a moderate expression seen in placenta and expressed at low levels in the liver and heart.

The protein resides in the lysosome. It carries out the reaction a sterol ester + H2O = a sterol + a fatty acid + H(+). It catalyses the reaction cholesteryl (9Z-octadecenoate) + H2O = cholesterol + (9Z)-octadecenoate + H(+). The catalysed reaction is a triacylglycerol + H2O = a 1,2-diacylglycerol + a fatty acid + H(+). The enzyme catalyses 1,2-di-(9Z-octadecenoyl)-glycerol + (9Z)-octadecenoate + H(+) = 1,2,3-tri-(9Z-octadecenoyl)-glycerol + H2O. It carries out the reaction a 1,2-diacylglycerol + H2O = a 1-acylglycerol + a fatty acid + H(+). It catalyses the reaction 1,2-di-(9Z-octadecenoyl)-glycerol + H2O = 1-(9Z-octadecenoyl)-glycerol + (9Z)-octadecenoate + H(+). The catalysed reaction is a 1,3-diacylglycerol + H2O = a 1-acylglycerol + a fatty acid + H(+). The enzyme catalyses 1,3-di-(9Z-octadecenoyl)-glycerol + H2O = 1-(9Z-octadecenoyl)-glycerol + (9Z)-octadecenoate + H(+). Its function is as follows. Catalyzes the deacylation of cholesteryl ester core lipids of endocytosed low density lipoproteins to generate free fatty acids and cholesterol. Hydrolyzes triglycerides (1,2,3-triacylglycerol) and diglycerides (such as 1,2-diacylglycerol and 1,3-diacylglycerol) with preference for the acyl moieties at the sn-1 or sn-3 positions. The sequence is that of Lysosomal acid lipase/cholesteryl ester hydrolase (LIPA) from Homo sapiens (Human).